Reading from the N-terminus, the 152-residue chain is Xanthine-guanine phosphoribosyltransferase (152 aa).

5-phospho-alpha-D-ribose 1-diphosphate is bound by residues 37 to 38 (RG), arginine 69, and 88 to 96 (DDLVDTGGT). Residue arginine 69 participates in GMP binding. Residue aspartate 89 coordinates Mg(2+). Aspartate 92 and isoleucine 135 together coordinate guanine. Aspartate 92 and isoleucine 135 together coordinate xanthine. Residues 92 to 96 (DTGGT) and 134 to 135 (WI) each bind GMP.

It belongs to the purine/pyrimidine phosphoribosyltransferase family. XGPT subfamily. As to quaternary structure, homotetramer. Requires Mg(2+) as cofactor.

The protein resides in the cell inner membrane. It carries out the reaction GMP + diphosphate = guanine + 5-phospho-alpha-D-ribose 1-diphosphate. The catalysed reaction is XMP + diphosphate = xanthine + 5-phospho-alpha-D-ribose 1-diphosphate. The enzyme catalyses IMP + diphosphate = hypoxanthine + 5-phospho-alpha-D-ribose 1-diphosphate. It participates in purine metabolism; GMP biosynthesis via salvage pathway; GMP from guanine: step 1/1. It functions in the pathway purine metabolism; XMP biosynthesis via salvage pathway; XMP from xanthine: step 1/1. Purine salvage pathway enzyme that catalyzes the transfer of the ribosyl-5-phosphate group from 5-phospho-alpha-D-ribose 1-diphosphate (PRPP) to the N9 position of the 6-oxopurines guanine and xanthine to form the corresponding ribonucleotides GMP (guanosine 5'-monophosphate) and XMP (xanthosine 5'-monophosphate), with the release of PPi. To a lesser extent, also acts on hypoxanthine. This chain is Xanthine-guanine phosphoribosyltransferase, found in Enterobacter sp. (strain 638).